Consider the following 270-residue polypeptide: Tryptophan 2,3-dioxygenase-like protein (270 aa).

Belongs to the tryptophan 2,3-dioxygenase family.

The chain is Tryptophan 2,3-dioxygenase-like protein from Xanthomonas campestris pv. campestris (strain 8004).